A 435-amino-acid chain; its full sequence is Enolase (435 aa).

Residues His155 and Glu164 each coordinate substrate. The active-site Proton donor is Glu205. Positions 243, 292, and 319 each coordinate Mg(2+). Substrate is bound by residues Glu292, Asp319, Lys344, 371 to 374 (SHRS), and Lys395. Catalysis depends on Lys344, which acts as the Proton acceptor.

Belongs to the enolase family. As to quaternary structure, homooctamer. It depends on Mg(2+) as a cofactor.

Its subcellular location is the cytoplasm. The protein localises to the secreted. The protein resides in the cell surface. The enzyme catalyses (2R)-2-phosphoglycerate = phosphoenolpyruvate + H2O. Its pathway is carbohydrate degradation; glycolysis; pyruvate from D-glyceraldehyde 3-phosphate: step 4/5. Catalyzes the reversible conversion of 2-phosphoglycerate (2-PG) into phosphoenolpyruvate (PEP). It is essential for the degradation of carbohydrates via glycolysis. In terms of biological role, 'Moonlights' as a plasminogen receptor and plasmin activator. Binds host (human) plasminogen in vitro; enhances the activity of host tissue-specific plasminogen activator (tPA). The chain is Enolase from Streptococcus pyogenes serotype M1.